Reading from the N-terminus, the 791-residue chain is Ubiquitin carboxyl-terminal hydrolase 10-A (791 aa).

Polar residues-rich tracts occupy residues 118–139 (FSES…SGTG) and 270–284 (DTTE…QTLE). Disordered regions lie at residues 118-156 (FSES…YYSY) and 270-291 (DTTE…EDTA). Residues 408–788 (RGLINKGNWC…TAYLLYYRRV (381 aa)) enclose the USP domain. The active-site Nucleophile is the cysteine 417. The tract at residues 560-580 (EVNKEEQEGSDEEWEQVGPRN) is disordered. Histidine 742 functions as the Proton acceptor in the catalytic mechanism.

This sequence belongs to the peptidase C19 family. USP10 subfamily.

It is found in the cytoplasm. Its subcellular location is the nucleus. It carries out the reaction Thiol-dependent hydrolysis of ester, thioester, amide, peptide and isopeptide bonds formed by the C-terminal Gly of ubiquitin (a 76-residue protein attached to proteins as an intracellular targeting signal).. Its function is as follows. Hydrolase that can remove conjugated ubiquitin from target proteins such as p53/tp53, rps2/us5, rps3/us3, rps10/eS10, becn1, snx3 and cftr. Acts as an essential regulator of p53/tp53 stability: in unstressed cells, specifically deubiquitinates p53/tp53 in the cytoplasm, leading to counteracts MDM2 action and stabilize p53/tp53. Following DNA damage, translocates to the nucleus and deubiquitinates p53/tp53, leading to regulate the p53/TP53-dependent DNA damage response. Component of a regulatory loop that controls autophagy and p53/tp53 levels. Plays a key role in 40S ribosome subunit recycling when a ribosome has stalled during translation: acts both by inhibiting formation of stress granules, which store stalled translation pre-initiation complexes, and mediating deubiquitination of 40S ribosome subunits. Deubiquitinates cftr in early endosomes, enhancing its endocytic recycling. This chain is Ubiquitin carboxyl-terminal hydrolase 10-A (usp10-a), found in Xenopus laevis (African clawed frog).